The primary structure comprises 237 residues: Putative HTH-type transcriptional regulator ycf28 (237 aa).

The HTH crp-type domain occupies 155 to 228 (KSITNRLISL…KKKVIIHDPI (74 aa)). Residues 188–207 (HKVLAQIIGSNRVSITRIIS) constitute a DNA-binding region (H-T-H motif).

Its subcellular location is the plastid. The protein resides in the chloroplast. The chain is Putative HTH-type transcriptional regulator ycf28 (ycf28) from Porphyra purpurea (Red seaweed).